The primary structure comprises 371 residues: Envelope glycoprotein M (371 aa).

Topologically, residues Met-1–Thr-13 are intravirion. Residues Trp-14–Leu-34 form a helical membrane-spanning segment. Residues Ser-35–Cys-79 are Virion surface-facing. The chain crosses the membrane as a helical span at residues Tyr-80–Ile-100. The Intravirion portion of the chain corresponds to Lys-101–Leu-126. Residues Thr-127–Phe-147 form a helical membrane-spanning segment. The Virion surface portion of the chain corresponds to Arg-148–Ser-151. Residues Met-152–Val-172 traverse the membrane as a helical segment. Topologically, residues Thr-173 to Thr-200 are intravirion. The chain crosses the membrane as a helical span at residues Leu-201–Leu-221. Topologically, residues Cys-222–Ala-239 are virion surface. Residues Val-240–Phe-260 traverse the membrane as a helical segment. The Intravirion segment spans residues Gln-261–Lys-264. A helical membrane pass occupies residues Val-265–Val-285. The Virion surface segment spans residues Gln-286–Gly-298. Residues Ile-299–Val-319 traverse the membrane as a helical segment. At Arg-320–Ala-371 the chain is on the intravirion side. A disordered region spans residues Leu-346–Ala-371. The segment covering Ser-347–Glu-359 has biased composition (basic and acidic residues). Residues Glu-360 to Ala-371 show a composition bias toward acidic residues.

Belongs to the herpesviridae glycoprotein M family. Interacts (via N-terminus) with gN (via N-terminus). The gM-gN heterodimer forms the gCII complex.

The protein resides in the virion membrane. It localises to the host Golgi apparatus. Its subcellular location is the host trans-Golgi network. The protein localises to the host endosome membrane. It is found in the host nucleus inner membrane. Its function is as follows. Envelope glycoprotein important for virion assembly and egress. Plays a role in the correct incorporation of gH-gL into virion membrane. Directs the glycoprotein N (gN) to the host trans-Golgi network. The protein is Envelope glycoprotein M of Homo sapiens (Human).